The following is a 492-amino-acid chain: Homoserine O-acetyltransferase (492 aa).

One can recognise an AB hydrolase-1 domain in the interval 47–354 (NVILVCHALT…NYGHDAFLLE (308 aa)). Catalysis depends on Ser-152, which acts as the Nucleophile. Arg-221 provides a ligand contact to substrate. Catalysis depends on residues Asp-315 and His-348. Residue Asp-349 participates in substrate binding. CBS domains are found at residues 375–432 (MKLD…FTTL) and 436–492 (LTKN…HRCT).

Belongs to the AB hydrolase superfamily. MetX family. Homodimer.

It localises to the cytoplasm. It catalyses the reaction L-homoserine + acetyl-CoA = O-acetyl-L-homoserine + CoA. Its pathway is amino-acid biosynthesis; L-methionine biosynthesis via de novo pathway; O-acetyl-L-homoserine from L-homoserine: step 1/1. In terms of biological role, transfers an acetyl group from acetyl-CoA to L-homoserine, forming acetyl-L-homoserine. The polypeptide is Homoserine O-acetyltransferase (Methanosalsum zhilinae (strain DSM 4017 / NBRC 107636 / OCM 62 / WeN5) (Methanohalophilus zhilinae)).